Here is a 415-residue protein sequence, read N- to C-terminus: MKHLPEQDAQVFKAIQLERKRQQDKIELIASENFVSEAVMEAQGSVLTNKYAEGYPGKRYYGGCEHVDVVEDIARDRAKEIFGAEYVNVQPHSGAQANMAVYFTILEHGDTVLGMNLSHGGHLTHGSPVNFSGVQYNFVEYGVDKETQHIDYQDVLEKAREHKPKLIVAGASAYPRQIDFKKFREIADEVGAYFMVDMAHIAGLVAVGLHPNPVPYADFVTTTTHKTLRGPRGGMILCREEFGKKIDKSIFPGIQGGPLMHVISAKAVSFGEVLNGDFKTYAQNVIDNAKQLAETLLSEDIQLVSGGTDNHLVLIDLRSLGITGKIAENVLDEIGITVNKNAIPYDPEKPFVTSGVRVGTAAVTSRGFDQEAMKEVGSIIALALKHHEDEAKLEEAKKRVSDLTARFPLYNELDY.

(6S)-5,6,7,8-tetrahydrofolate-binding positions include leucine 117 and 121–123 (GHL). Lysine 226 carries the post-translational modification N6-(pyridoxal phosphate)lysine. A (6S)-5,6,7,8-tetrahydrofolate-binding site is contributed by glutamate 241.

This sequence belongs to the SHMT family. As to quaternary structure, homodimer. Pyridoxal 5'-phosphate serves as cofactor.

The protein localises to the cytoplasm. The enzyme catalyses (6R)-5,10-methylene-5,6,7,8-tetrahydrofolate + glycine + H2O = (6S)-5,6,7,8-tetrahydrofolate + L-serine. It participates in one-carbon metabolism; tetrahydrofolate interconversion. Its pathway is amino-acid biosynthesis; glycine biosynthesis; glycine from L-serine: step 1/1. Its function is as follows. Catalyzes the reversible interconversion of serine and glycine with tetrahydrofolate (THF) serving as the one-carbon carrier. This reaction serves as the major source of one-carbon groups required for the biosynthesis of purines, thymidylate, methionine, and other important biomolecules. Also exhibits THF-independent aldolase activity toward beta-hydroxyamino acids, producing glycine and aldehydes, via a retro-aldol mechanism. This chain is Serine hydroxymethyltransferase, found in Bacillus pumilus (strain SAFR-032).